The sequence spans 290 residues: TP53-target gene 5 protein (290 aa).

Residues 1-13 (MSPSAKKRPKNSR) are compositionally biased toward basic residues. Disordered stretches follow at residues 1–29 (MSPSAKKRPKNSRVSKMQDEKLRDETEQP) and 114–178 (KLES…RQPL). Basic and acidic residues-rich tracts occupy residues 16–26 (KMQDEKLRDET), 114–130 (KLESTGDPKKKEYKEWK), and 138–167 (RNKEKTSLAAMPRKEKHIEPEVPRTSRDDS).

Interacts with p53/TP53. In terms of tissue distribution, highly expressed in heart, brain and small intestine. Less abundant in skeletal muscle, spleen, prostate, ovary and colon. A smaller transcript is expressed specifically in the testis.

It localises to the cytoplasm. The protein localises to the nucleus. In terms of biological role, may play a significant role in p53/TP53-mediating signaling pathway. The sequence is that of TP53-target gene 5 protein (TP53TG5) from Homo sapiens (Human).